The sequence spans 462 residues: Keratin, type I cytoskeletal 28 (462 aa).

Residues 1-26 (MSLRFSGGSRHVGIQSGSLRPPSGGA) form a disordered region. Residues 1–83 (MSLRFSGGSR…GSEGGLLSGN (83 aa)) form a head region. The interval 84–119 (EKVTMQNLNNRLASYLDNVKALEEANSELERKIKTW) is coil 1A. The 316-residue stretch at 84-399 (EKVTMQNLNN…RLIDGDENSC (316 aa)) folds into the IF rod domain. Residues 120 to 141 (HEKYGPGSCRGLDRDYSKYHLT) are linker 1. Positions 142–233 (IEDLKSKIIS…KNHEEEMKVL (92 aa)) are coil 1B. The tract at residues 234-256 (QCAAGGNVNVEMNAAPGVDLTVL) is linker 12. The coil 2 stretch occupies residues 257-395 (LNNMRAEYEA…ETYCRLIDGD (139 aa)). The interval 396–462 (ENSCSVSKGF…NGKAEQRVPF (67 aa)) is tail.

Belongs to the intermediate filament family. In terms of assembly, heterotetramer of two type I and two type II keratins. In the hair follicle and bulb, uniformly expressed in all three layers of the inner root sheath (the Henle layer, the Huxley layer and the cuticle) and observed in matrix cells (at protein level).

The protein resides in the cytoplasm. In terms of biological role, essential for the proper assembly of types I and II keratin protein complexes and the formation of keratin intermediate filaments in the inner root sheath (irs). This is Keratin, type I cytoskeletal 28 from Mus musculus (Mouse).